A 161-amino-acid chain; its full sequence is Ribonuclease P protein component 2 (161 aa).

This sequence belongs to the eukaryotic/archaeal RNase P protein component 2 family. As to quaternary structure, consists of a catalytic RNA component and at least 4-5 protein subunits.

It is found in the cytoplasm. It carries out the reaction Endonucleolytic cleavage of RNA, removing 5'-extranucleotides from tRNA precursor.. Its function is as follows. Part of ribonuclease P, a protein complex that generates mature tRNA molecules by cleaving their 5'-ends. This chain is Ribonuclease P protein component 2, found in Natronomonas pharaonis (strain ATCC 35678 / DSM 2160 / CIP 103997 / JCM 8858 / NBRC 14720 / NCIMB 2260 / Gabara) (Halobacterium pharaonis).